The primary structure comprises 507 residues: uncharacterized protein (507 aa).

The next 14 helical transmembrane spans lie at 8–28 (VKGV…AYLV), 41–61 (VGLF…RAFG), 86–106 (IVFV…LVVI), 130–150 (INIL…VAFF), 171–191 (ILSV…HNAY), 193–213 (PSVS…YIVV), 235–255 (LFSY…LGYL), 275–295 (VAMP…AVLF), 323–343 (IIVT…INIL), 355–375 (IQIL…FNIL), 387–407 (ILYI…PKFG), 408–428 (IIGA…FQIW), 444–464 (ILVI…KDLI), and 467–487 (VILQ…LGIF).

It belongs to the polysaccharide synthase family.

The protein localises to the cell membrane. This is an uncharacterized protein from Methanocaldococcus jannaschii (strain ATCC 43067 / DSM 2661 / JAL-1 / JCM 10045 / NBRC 100440) (Methanococcus jannaschii).